We begin with the raw amino-acid sequence, 194 residues long: dTTP/UTP pyrophosphatase (194 aa).

The active-site Proton acceptor is the Asp68.

It belongs to the Maf family. YhdE subfamily. It depends on a divalent metal cation as a cofactor.

Its subcellular location is the cytoplasm. It catalyses the reaction dTTP + H2O = dTMP + diphosphate + H(+). The catalysed reaction is UTP + H2O = UMP + diphosphate + H(+). Functionally, nucleoside triphosphate pyrophosphatase that hydrolyzes dTTP and UTP. May have a dual role in cell division arrest and in preventing the incorporation of modified nucleotides into cellular nucleic acids. The sequence is that of dTTP/UTP pyrophosphatase from Clostridioides difficile (strain 630) (Peptoclostridium difficile).